The following is an 825-amino-acid chain: Translation initiation factor IF-2 (825 aa).

4 stretches are compositionally biased toward basic and acidic residues: residues 1–19, 35–45, 70–98, and 113–122; these read MTKKQENETSKELGMDNKK, RKGEKKTEGKR, LLKDLKQKQRADEARLDQESKAAKQEYKK, and KKVESVEKPA. The disordered stretch occupies residues 1–239; the sequence is MTKKQENETS…TQRKDRPLPE (239 aa). Residues 158-169 show a composition bias toward low complexity; the sequence is PSSSRRPSSRPS. Over residues 181-191 the composition is skewed to basic residues; the sequence is GRRRKSGKPGR. A compositionally biased stretch (polar residues) spans 194-208; the sequence is QNSYADQGRGANSNR. The segment covering 211 to 220 has biased composition (basic residues); it reads QRKRKNKKHQ. One can recognise a tr-type G domain in the interval 326 to 495; the sequence is VRPPVVTIMG…ILEADMLELK (170 aa). A G1 region spans residues 335-342; that stretch reads GHVDHGKT. 335–342 provides a ligand contact to GTP; sequence GHVDHGKT. The tract at residues 360–364 is G2; sequence GITQN. The G3 stretch occupies residues 381–384; that stretch reads DTPG. GTP is bound by residues 381–385 and 435–438; these read DTPGH and NKMD. The G4 stretch occupies residues 435 to 438; the sequence is NKMD. The segment at 471 to 473 is G5; sequence SAK.

It belongs to the TRAFAC class translation factor GTPase superfamily. Classic translation factor GTPase family. IF-2 subfamily.

The protein localises to the cytoplasm. One of the essential components for the initiation of protein synthesis. Protects formylmethionyl-tRNA from spontaneous hydrolysis and promotes its binding to the 30S ribosomal subunits. Also involved in the hydrolysis of GTP during the formation of the 70S ribosomal complex. The polypeptide is Translation initiation factor IF-2 (Lactobacillus delbrueckii subsp. bulgaricus (strain ATCC 11842 / DSM 20081 / BCRC 10696 / JCM 1002 / NBRC 13953 / NCIMB 11778 / NCTC 12712 / WDCM 00102 / Lb 14)).